Consider the following 318-residue polypeptide: Phosphatidylglycerol--prolipoprotein diacylglyceryl transferase (318 aa).

The next 3 helical transmembrane spans lie at 24 to 44, 60 to 80, and 115 to 135; these read GPST…YLLP, LLLL…VFEI, and LFSG…LFIT. Arg164 contacts a 1,2-diacyl-sn-glycero-3-phospho-(1'-sn-glycerol). The next 2 helical transmembrane spans lie at 198 to 218 and 285 to 305; these read VPVW…FFYF and GFSQ…FFIL.

Belongs to the Lgt family.

The protein localises to the cell inner membrane. The catalysed reaction is L-cysteinyl-[prolipoprotein] + a 1,2-diacyl-sn-glycero-3-phospho-(1'-sn-glycerol) = an S-1,2-diacyl-sn-glyceryl-L-cysteinyl-[prolipoprotein] + sn-glycerol 1-phosphate + H(+). It functions in the pathway protein modification; lipoprotein biosynthesis (diacylglyceryl transfer). Functionally, catalyzes the transfer of the diacylglyceryl group from phosphatidylglycerol to the sulfhydryl group of the N-terminal cysteine of a prolipoprotein, the first step in the formation of mature lipoproteins. This is Phosphatidylglycerol--prolipoprotein diacylglyceryl transferase from Leptospira interrogans serogroup Icterohaemorrhagiae serovar copenhageni (strain Fiocruz L1-130).